The primary structure comprises 271 residues: Insulin-like growth factor-binding protein 5 (271 aa).

The signal sequence occupies residues 1 to 19 (MVISVVLLLLAAYAVPAQG). The IGFBP N-terminal domain occupies 22 to 102 (SFVHCEPCDE…LHGRGVCLNE (81 aa)). 6 disulfide bridges follow: Cys26/Cys52, Cys29/Cys54, Cys37/Cys55, Cys44/Cys58, Cys66/Cys79, and Cys73/Cys99. A compositionally biased stretch (basic and acidic residues) spans 109–121 (TKIERDSREHEEP). A disordered region spans residues 109–129 (TKIERDSREHEEPTTSEMAEE). Position 115 is a phosphoserine (Ser115). Residues 188-262 (QGPCRRHMEA…MEYVDGDFQC (75 aa)) enclose the Thyroglobulin type-1 domain. 3 disulfides stabilise this stretch: Cys191/Cys218, Cys229/Cys240, and Cys242/Cys262.

As to quaternary structure, interacts with IGF1; this interaction enhances the growth stimulatory effects of IGF1 on fibroblasts. Interacts with CAV1; this interaction allows trafficking of IGFBP5 from the plasma membrane to the nucleus. Interacts with NCL; this interaction is necessary for IGFBP5 localization to the nucleus. In terms of tissue distribution, most abundant in kidney, uterus and gastrocnemius muscle.

Its subcellular location is the secreted. The protein resides in the cytoplasm. It is found in the nucleus. Multifunctional protein that plays a critical role in regulating the availability of IGFs to their receptors and thereby regulates IGF-mediated cellular processes including proliferation, differentiation, and apoptosis in a cell-type specific manner. Increases the cell proliferation of osteoblasts, intestinal smooth muscle cells and neuroblastoma cells. Enhances adhesion and survival of epithelial cells but decreases adhesion of mesenchymal cells. Once secreted, acts as a major mediator of mTORC1-dependent feedback inhibition of IGF1 signaling. Also plays a role in the induction of extracellular matrix (ECM) production and deposition independently of its nuclear translocation and binding to IGFs. Acts itself as a growth factor that can act independently of IGFs to regulate bone formation. Acts as a ligand for the ROR1 receptor which triggers formation of ROR1/HER2 heterodimer to enhance CREB oncogenic signaling. This chain is Insulin-like growth factor-binding protein 5 (Igfbp5), found in Mus musculus (Mouse).